The chain runs to 491 residues: Ketol-acid reductoisomerase (NADP(+)) (491 aa).

A KARI N-terminal Rossmann domain is found at 15 to 208 (AQLGKCRFMG…GGHRAGVLES (194 aa)). Residues 45-48 (CGAQ), arginine 68, arginine 76, serine 78, and 108-110 (DKQ) contribute to the NADP(+) site. Histidine 132 is a catalytic residue. NADP(+) is bound at residue glycine 158. 2 consecutive KARI C-terminal knotted domains span residues 209-344 (SFVA…TAPQ) and 345-484 (FEGK…MTDM). The Mg(2+) site is built by aspartate 217, glutamate 221, glutamate 389, and glutamate 393. Residue serine 414 coordinates substrate.

The protein belongs to the ketol-acid reductoisomerase family. Mg(2+) serves as cofactor.

The catalysed reaction is (2R)-2,3-dihydroxy-3-methylbutanoate + NADP(+) = (2S)-2-acetolactate + NADPH + H(+). It catalyses the reaction (2R,3R)-2,3-dihydroxy-3-methylpentanoate + NADP(+) = (S)-2-ethyl-2-hydroxy-3-oxobutanoate + NADPH + H(+). It participates in amino-acid biosynthesis; L-isoleucine biosynthesis; L-isoleucine from 2-oxobutanoate: step 2/4. It functions in the pathway amino-acid biosynthesis; L-valine biosynthesis; L-valine from pyruvate: step 2/4. Functionally, involved in the biosynthesis of branched-chain amino acids (BCAA). Catalyzes an alkyl-migration followed by a ketol-acid reduction of (S)-2-acetolactate (S2AL) to yield (R)-2,3-dihydroxy-isovalerate. In the isomerase reaction, S2AL is rearranged via a Mg-dependent methyl migration to produce 3-hydroxy-3-methyl-2-ketobutyrate (HMKB). In the reductase reaction, this 2-ketoacid undergoes a metal-dependent reduction by NADPH to yield (R)-2,3-dihydroxy-isovalerate. The sequence is that of Ketol-acid reductoisomerase (NADP(+)) from Salmonella agona (strain SL483).